A 391-amino-acid polypeptide reads, in one-letter code: MRVIGLMSGTSYDAVEAAAADLELEGEALVMRPLGHLSAPYPDGLRDLIADSLPPAAATVRTVARLDTGIGQAFADVAVRAVRELCGGAAGLVVSHGQTLYHWVEDGAVRGTLQLGQPAWIAEATGLPVVSDLRGRDVAAGGQGAPLVAMTDVLAMAALPGVPAALNLGGIANVTVVAPGAEPLAFDTGPANALMDAAVRHFTGGAAAFDEDGRRAGAGRVDPGLLRVLLDDPYYGRPAPKSTGKEQFHLPYLLAALAAAPVAEPDDVLATLARLTAVTVADACRAHGVTRLVVSGGGARNPVLMGMIAEELPGVDLGSSDALGLPSDAKEALAFALLGFLTVNGLPGAIPSGTGARRASLLGSITPGREPLRLPEPAGEPPRVLRVVGGP.

9 to 16 (GTSYDAVE) contacts ATP.

Belongs to the anhydro-N-acetylmuramic acid kinase family.

The catalysed reaction is 1,6-anhydro-N-acetyl-beta-muramate + ATP + H2O = N-acetyl-D-muramate 6-phosphate + ADP + H(+). The protein operates within amino-sugar metabolism; 1,6-anhydro-N-acetylmuramate degradation. Its pathway is cell wall biogenesis; peptidoglycan recycling. Functionally, catalyzes the specific phosphorylation of 1,6-anhydro-N-acetylmuramic acid (anhMurNAc) with the simultaneous cleavage of the 1,6-anhydro ring, generating MurNAc-6-P. Is required for the utilization of anhMurNAc either imported from the medium or derived from its own cell wall murein, and thus plays a role in cell wall recycling. This chain is Anhydro-N-acetylmuramic acid kinase, found in Streptomyces coelicolor (strain ATCC BAA-471 / A3(2) / M145).